Reading from the N-terminus, the 995-residue chain is Translation initiation factor IF-2 (995 aa).

The disordered stretch occupies residues 53–399 (NNAGSPAPAA…SGAPRGQGQV (347 aa)). 2 stretches are compositionally biased toward pro residues: residues 60-87 (PAAPPAVAPPTPTPTPPRTPTPAPPPGG) and 104-119 (TPGPKPKGPVPGPPQS). Residues 135–160 (AAAEARAAALKAEQEAAVKAAQAARQ) show a composition bias toward low complexity. The segment covering 161–171 (QQRENVRREPP) has biased composition (basic and acidic residues). Positions 177-192 (RPGPRPGPGTMPPRPG) are enriched in pro residues. Residues 193-202 (SPAAGRSGAP) show a composition bias toward low complexity. Composition is skewed to pro residues over residues 203 to 213 (APGPGPRPGGR) and 242 to 264 (RPSPASMPPRPSPASMPPRPSPA). Residues 273–363 (RPGGPGSGRP…GAAGAFGRPG (91 aa)) show a composition bias toward gly residues. Basic residues predominate over residues 367–376 (TRGRKSKKQR). The tr-type G domain occupies 486–658 (SRPPVVTVMG…VLLTADASLE (173 aa)). The interval 495–502 (GHVDHGKT) is G1. GTP is bound at residue 495–502 (GHVDHGKT). Residues 520-524 (GITQH) are G2. The segment at 545–548 (DTPG) is G3. Residues 545 to 549 (DTPGH) and 599 to 602 (NKID) each bind GTP. Residues 599 to 602 (NKID) are G4. A G5 region spans residues 635–637 (AAK).

Belongs to the TRAFAC class translation factor GTPase superfamily. Classic translation factor GTPase family. IF-2 subfamily.

It localises to the cytoplasm. Functionally, one of the essential components for the initiation of protein synthesis. Protects formylmethionyl-tRNA from spontaneous hydrolysis and promotes its binding to the 30S ribosomal subunits. Also involved in the hydrolysis of GTP during the formation of the 70S ribosomal complex. The chain is Translation initiation factor IF-2 from Salinispora arenicola (strain CNS-205).